A 479-amino-acid chain; its full sequence is GTPase Obg (479 aa).

The Obg domain occupies 2 to 159 (TTFVDRVELH…QDIVLELKTV (158 aa)). A disordered region spans residues 61 to 87 (HHKPHRSATNGKPGEGGNRSGKDGQDL). Residues 160-331 (ADVALVGYPS…LSFALAELVG (172 aa)) form the OBG-type G domain. Residues 166–173 (GYPSAGKS), 191–195 (FTTLV), 212–215 (DVPG), 283–286 (NKID), and 312–314 (SAV) contribute to the GTP site. Residues Ser173 and Thr193 each coordinate Mg(2+). The region spanning 349-431 (PKAVDDAGFT…DNAVVFDWEP (83 aa)) is the OCT domain. Residues 440–453 (LGRRGEDHRLDEPR) are compositionally biased toward basic and acidic residues. Residues 440 to 479 (LGRRGEDHRLDEPRPAAQRRRDKQAERDDAEKEYDDFEPF) form a disordered region. Acidic residues predominate over residues 470–479 (EKEYDDFEPF).

Belongs to the TRAFAC class OBG-HflX-like GTPase superfamily. OBG GTPase family. In terms of assembly, monomer. Requires Mg(2+) as cofactor.

It is found in the cytoplasm. Its function is as follows. An essential GTPase which binds GTP, GDP and possibly (p)ppGpp with moderate affinity, with high nucleotide exchange rates and a fairly low GTP hydrolysis rate. Plays a role in control of the cell cycle, stress response, ribosome biogenesis and in those bacteria that undergo differentiation, in morphogenesis control. The polypeptide is GTPase Obg (Streptomyces avermitilis (strain ATCC 31267 / DSM 46492 / JCM 5070 / NBRC 14893 / NCIMB 12804 / NRRL 8165 / MA-4680)).